Here is a 260-residue protein sequence, read N- to C-terminus: Carbonic anhydrase 3 (260 aa).

N-acetylalanine is present on A2. The region spanning 3–259 (KEWGYASHNG…IKGRVVRASF (257 aa)) is the Alpha-carbonic anhydrase domain. Phosphoserine is present on residues S29, S43, S48, S50, and S55. Positions 64–67 (KTCR) are involved in proton transfer. Position 73 is a phosphothreonine (T73). Zn(2+)-binding residues include H94, H96, and H119. Y127 carries the post-translational modification Phosphotyrosine. A Phosphothreonine modification is found at T129. Residues C182 and C187 each carry the S-glutathionyl cysteine modification. Residue 198–199 (TT) participates in substrate binding. T216 is modified (phosphothreonine). Residue S219 is modified to Phosphoserine.

The protein belongs to the alpha-carbonic anhydrase family. It depends on Zn(2+) as a cofactor. In terms of processing, S-thiolated both by thiol-disulfide exchange with glutathione disulfide and by oxyradical-initiated S-thiolation with reduced glutathione. Post-translationally, S-glutathionylated in hepatocytes under oxidative stress. Expressed in liver and muscle.

It is found in the cytoplasm. The enzyme catalyses hydrogencarbonate + H(+) = CO2 + H2O. Inhibited by acetazolamide. Its function is as follows. Reversible hydration of carbon dioxide. This Rattus norvegicus (Rat) protein is Carbonic anhydrase 3 (Ca3).